Reading from the N-terminus, the 343-residue chain is MSDRQAALDMALKQIEKQFGKGSIMKLGEQAERKVSTVSSGSLALDVALGVGGYPRGRIIEIYGPESSGKTTVSLHAIAEVQRQGGQAAFIDAEHAMDPVYAQKLGVNIDELLLSQPDTGEQGLEIAEALVRSGAVDIIVIDSVAALVPKAEIEGDMGDSHVGLQARLMSQALRKLSGAINKSKTIAIFINQIREKVGVMFGNPETTPGGRALKFYSTVRLEVRRAEQLKQGNDIVGNKTKVKVVKNKVAPPFRVAEVDIMYGEGISREGEILDMASELDIVQKSGAWYSYNEERLGQGRENSKQFLKENTDLREEIAFFIREHHGISEDSGAEGMEDPNLLD.

64–71 (GPESSGKT) provides a ligand contact to ATP.

It belongs to the RecA family.

It is found in the cytoplasm. Its function is as follows. Can catalyze the hydrolysis of ATP in the presence of single-stranded DNA, the ATP-dependent uptake of single-stranded DNA by duplex DNA, and the ATP-dependent hybridization of homologous single-stranded DNAs. It interacts with LexA causing its activation and leading to its autocatalytic cleavage. This chain is Protein RecA, found in Bacillus thuringiensis (strain Al Hakam).